Reading from the N-terminus, the 279-residue chain is Pantothenate synthetase (279 aa).

26-33 (MGNLHDGH) contacts ATP. The active-site Proton donor is the H33. Residue Q57 participates in (R)-pantoate binding. Q57 lines the beta-alanine pocket. ATP is bound at residue 144–147 (GKKD). Q150 provides a ligand contact to (R)-pantoate. Residues V173 and 181-184 (LSSR) each bind ATP.

Belongs to the pantothenate synthetase family. Homodimer.

It is found in the cytoplasm. It catalyses the reaction (R)-pantoate + beta-alanine + ATP = (R)-pantothenate + AMP + diphosphate + H(+). The protein operates within cofactor biosynthesis; (R)-pantothenate biosynthesis; (R)-pantothenate from (R)-pantoate and beta-alanine: step 1/1. In terms of biological role, catalyzes the condensation of pantoate with beta-alanine in an ATP-dependent reaction via a pantoyl-adenylate intermediate. The polypeptide is Pantothenate synthetase (Burkholderia mallei (strain NCTC 10229)).